Consider the following 466-residue polypeptide: Putative proline/betaine transporter (466 aa).

Helical transmembrane passes span 20–42, 63–83, 91–111, 116–136, 164–184, 191–211, 239–259, 285–305, 313–332, 337–354, 377–397, and 405–425; these read VVATGIGNAMEWFDFGVYAYTTA, FAALAIAFLLRPIGGVVFGII, VVLTSTIILMAFSTLTIGLLP, IGLWAPILLLLARVLQGFSTG, IGTLSGYIAASIMIAVLTFFL, SFGWRIPFLLGLFLGLFGLYL, IIRFYYIDIFVCFVAVVFFNV, VLITCVMAIMIPLALMFGKLA, VFLIGTGGLTLFSIIAFMLL, FVVIVIGIFILGFFLSTY, VTFNISVSIFGGTTPLVATWL, and LAPAYYLTAISVIGFLVITFL.

The protein belongs to the major facilitator superfamily. Metabolite:H+ Symporter (MHS) family (TC 2.A.1.6) family.

Its subcellular location is the cell membrane. In terms of biological role, may be a proton symporter involved in the uptake of osmolytes such as proline and glycine betaine. In Staphylococcus aureus (strain MSSA476), this protein is Putative proline/betaine transporter (proP).